The sequence spans 348 residues: Phospho-2-dehydro-3-deoxyheptonate aldolase, Trp-sensitive (348 aa).

Belongs to the class-I DAHP synthase family.

It catalyses the reaction D-erythrose 4-phosphate + phosphoenolpyruvate + H2O = 7-phospho-2-dehydro-3-deoxy-D-arabino-heptonate + phosphate. It functions in the pathway metabolic intermediate biosynthesis; chorismate biosynthesis; chorismate from D-erythrose 4-phosphate and phosphoenolpyruvate: step 1/7. In terms of biological role, stereospecific condensation of phosphoenolpyruvate (PEP) and D-erythrose-4-phosphate (E4P) giving rise to 3-deoxy-D-arabino-heptulosonate-7-phosphate (DAHP). The polypeptide is Phospho-2-dehydro-3-deoxyheptonate aldolase, Trp-sensitive (aroH) (Shigella flexneri).